We begin with the raw amino-acid sequence, 122 residues long: Basic phospholipase A2 CbII (122 aa).

7 cysteine pairs are disulfide-bonded: Cys-26–Cys-115, Cys-28–Cys-44, Cys-43–Cys-95, Cys-49–Cys-122, Cys-50–Cys-88, Cys-57–Cys-81, and Cys-75–Cys-86. Residues Tyr-27, Gly-29, and Gly-31 each coordinate Ca(2+). Residue His-47 is part of the active site. Asp-48 provides a ligand contact to Ca(2+). Residue Asp-89 is part of the active site.

It belongs to the phospholipase A2 family. Group I subfamily. D49 sub-subfamily. Heterodimer of an acidic subunit (CbIalpha or CbIbeta) and a basic subunit (CbII). The acidic subunit is non-toxic, and increases the toxicity of the basic subunit. Ca(2+) serves as cofactor. As to expression, expressed by the venom gland.

It is found in the secreted. It carries out the reaction a 1,2-diacyl-sn-glycero-3-phosphocholine + H2O = a 1-acyl-sn-glycero-3-phosphocholine + a fatty acid + H(+). In terms of biological role, heterodimer: presynaptic neurotoxin. Monomer: Snake venom phospholipase A2 (PLA2) that exhibits strong anticoagulant effects by binding to factor Xa (F10) and inhibiting the prothrombinase activity (IC(50) is 20 nM). PLA2 catalyzes the calcium-dependent hydrolysis of the 2-acyl groups in 3-sn-phosphoglycerides. The protein is Basic phospholipase A2 CbII of Pseudocerastes fieldi (Field's horned viper).